Reading from the N-terminus, the 436-residue chain is 3-ketoacyl-CoA thiolase (436 aa).

Residue Cys-99 is the Acyl-thioester intermediate of the active site. Residues His-392 and Cys-422 each act as proton acceptor in the active site.

The protein belongs to the thiolase-like superfamily. Thiolase family. In terms of assembly, heterotetramer of two alpha chains (FadJ) and two beta chains (FadI).

It is found in the cytoplasm. The catalysed reaction is an acyl-CoA + acetyl-CoA = a 3-oxoacyl-CoA + CoA. The protein operates within lipid metabolism; fatty acid beta-oxidation. Functionally, catalyzes the final step of fatty acid oxidation in which acetyl-CoA is released and the CoA ester of a fatty acid two carbons shorter is formed. This is 3-ketoacyl-CoA thiolase from Shigella flexneri serotype 5b (strain 8401).